A 346-amino-acid chain; its full sequence is L-glyceraldehyde 3-phosphate reductase (346 aa).

Residues tryptophan 33, aspartate 61, tyrosine 66, serine 168, glutamine 193, threonine 223, leucine 225, glutamine 227, lysine 233, serine 303, glutamine 307, and asparagine 311 each coordinate NADP(+).

Belongs to the shaker potassium channel beta subunit family. In terms of assembly, homotetramer. Homooctamer.

It catalyses the reaction a primary alcohol + NADP(+) = an aldehyde + NADPH + H(+). It carries out the reaction hydroxyacetone + NADP(+) = methylglyoxal + NADPH + H(+). Its function is as follows. Aldo-keto reductase that catalyzes the stereospecific, NADPH-dependent reduction of L-glyceraldehyde 3-phosphate (L-GAP) to L-glycerol 3-phosphate (L-G3P). The physiological role of Gpr is the detoxification of L-GAP, which may be formed via non-enzymatic and/or enzymatic racemization of D-GAP. Also contributes to cellular methylglyoxal detoxification by catalyzing the NADPH-dependent conversion of methylglyoxal to acetol. However, the catalytic efficiency of methylglyoxal reductase activity is more than 2 orders of magnitude lower than the L-GAP reductase activity. In addition, exhibits activity with glyoxal and probably plays a significant role in detoxification of glyoxal in vivo. Shows broad specificity and can use aromatic aldehydes such as 4-nitrobenzaldehyde and benzaldehyde, D,L-glyceraldehyde, phenylglyoxal, isatin and the model substrate 4-nitrobenzaldehyde. The chain is L-glyceraldehyde 3-phosphate reductase from Escherichia coli (strain K12).